Here is a 463-residue protein sequence, read N- to C-terminus: Fumarate hydratase class II (463 aa).

Residues 98-100 (SGT), 129-132 (HPND), 139-141 (SSN), and Thr187 each bind substrate. His188 serves as the catalytic Proton donor/acceptor. Ser318 is an active-site residue. Residues Ser319 and 324-326 (KVN) contribute to the substrate site.

The protein belongs to the class-II fumarase/aspartase family. Fumarase subfamily. In terms of assembly, homotetramer.

The protein resides in the cytoplasm. It carries out the reaction (S)-malate = fumarate + H2O. It participates in carbohydrate metabolism; tricarboxylic acid cycle; (S)-malate from fumarate: step 1/1. Functionally, involved in the TCA cycle. Catalyzes the stereospecific interconversion of fumarate to L-malate. The polypeptide is Fumarate hydratase class II (Brucella melitensis biotype 1 (strain ATCC 23456 / CCUG 17765 / NCTC 10094 / 16M)).